The primary structure comprises 428 residues: Serine--tRNA ligase (428 aa).

235–237 (TAE) serves as a coordination point for L-serine. 266–268 (RSE) provides a ligand contact to ATP. Glu-289 lines the L-serine pocket. 353–356 (EISS) contacts ATP. Ser-389 serves as a coordination point for L-serine.

The protein belongs to the class-II aminoacyl-tRNA synthetase family. Type-1 seryl-tRNA synthetase subfamily. As to quaternary structure, homodimer. The tRNA molecule binds across the dimer.

It is found in the cytoplasm. The catalysed reaction is tRNA(Ser) + L-serine + ATP = L-seryl-tRNA(Ser) + AMP + diphosphate + H(+). It catalyses the reaction tRNA(Sec) + L-serine + ATP = L-seryl-tRNA(Sec) + AMP + diphosphate + H(+). It participates in aminoacyl-tRNA biosynthesis; selenocysteinyl-tRNA(Sec) biosynthesis; L-seryl-tRNA(Sec) from L-serine and tRNA(Sec): step 1/1. Functionally, catalyzes the attachment of serine to tRNA(Ser). Is also able to aminoacylate tRNA(Sec) with serine, to form the misacylated tRNA L-seryl-tRNA(Sec), which will be further converted into selenocysteinyl-tRNA(Sec). The chain is Serine--tRNA ligase from Shewanella pealeana (strain ATCC 700345 / ANG-SQ1).